The following is a 714-amino-acid chain: Fatty acid oxidation complex subunit alpha (714 aa).

Residues 1–190 form an enoyl-CoA hydratase region; it reads MEMASAFTLN…KLGLVDDVVP (190 aa). The tract at residues 306 to 714 is 3-hydroxyacyl-CoA dehydrogenase; it reads APLNSVGILG…FWKTTATDLQ (409 aa).

The protein in the N-terminal section; belongs to the enoyl-CoA hydratase/isomerase family. It in the central section; belongs to the 3-hydroxyacyl-CoA dehydrogenase family. As to quaternary structure, heterotetramer of two alpha chains (FadJ) and two beta chains (FadI).

The protein resides in the cytoplasm. It catalyses the reaction a (3S)-3-hydroxyacyl-CoA = a (2E)-enoyl-CoA + H2O. It carries out the reaction a 4-saturated-(3S)-3-hydroxyacyl-CoA = a (3E)-enoyl-CoA + H2O. The catalysed reaction is a (3S)-3-hydroxyacyl-CoA + NAD(+) = a 3-oxoacyl-CoA + NADH + H(+). The enzyme catalyses (3S)-3-hydroxybutanoyl-CoA = (3R)-3-hydroxybutanoyl-CoA. It functions in the pathway lipid metabolism; fatty acid beta-oxidation. In terms of biological role, catalyzes the formation of a hydroxyacyl-CoA by addition of water on enoyl-CoA. Also exhibits 3-hydroxyacyl-CoA epimerase and 3-hydroxyacyl-CoA dehydrogenase activities. The chain is Fatty acid oxidation complex subunit alpha from Shigella boydii serotype 18 (strain CDC 3083-94 / BS512).